The primary structure comprises 116 residues: NADH-ubiquinone oxidoreductase chain 3 (116 aa).

A run of 3 helical transmembrane segments spans residues 3 to 23 (LITT…TISF), 56 to 76 (FFLI…LLPL), and 87 to 107 (LTLI…IYEW).

Belongs to the complex I subunit 3 family.

The protein localises to the mitochondrion membrane. The enzyme catalyses a ubiquinone + NADH + 5 H(+)(in) = a ubiquinol + NAD(+) + 4 H(+)(out). Functionally, core subunit of the mitochondrial membrane respiratory chain NADH dehydrogenase (Complex I) that is believed to belong to the minimal assembly required for catalysis. Complex I functions in the transfer of electrons from NADH to the respiratory chain. The immediate electron acceptor for the enzyme is believed to be ubiquinone. The chain is NADH-ubiquinone oxidoreductase chain 3 (MT-ND3) from Oncorhynchus gorbuscha (Pink salmon).